The sequence spans 311 residues: Zeta-sarcoglycan (311 aa).

Over 1 to 50 (MDRSTDLDIQELKMTREQYILATQQNNLPRPENAQLYPVGIYGWRKRCLY) the chain is Cytoplasmic. Residues 51 to 71 (FFVLLLLVTMIVNLAMTIWIL) form a helical; Signal-anchor for type II membrane protein membrane-spanning segment. Over 72–311 (KVMNFTVDGM…QSSSSICLWN (240 aa)) the chain is Extracellular. N-linked (GlcNAc...) asparagine glycans are attached at residues Asn75 and Asn123. Residues Cys285 and Cys301 are joined by a disulfide bond.

The protein belongs to the sarcoglycan beta/delta/gamma/zeta family. Expressed in the heart, skeletal muscle and arterial vascular smooth muscle.

It localises to the cell membrane. The protein localises to the sarcolemma. Its subcellular location is the cytoplasm. It is found in the cytoskeleton. In terms of biological role, component of the sarcoglycan complex, a subcomplex of the dystrophin-glycoprotein complex which forms a link between the F-actin cytoskeleton and the extracellular matrix. May play a role in the maintenance of striated muscle membrane stability. In Mus musculus (Mouse), this protein is Zeta-sarcoglycan (Sgcz).